We begin with the raw amino-acid sequence, 164 residues long: uncharacterized protein (164 aa).

An N-terminal signal peptide occupies residues 1 to 18; that stretch reads MILILTIIVGFLIYFVTA. N-linked (GlcNAc...) asparagine; by host glycosylation occurs at Asn88.

The protein belongs to the IIV-6 357R family.

This is an uncharacterized protein from Acheta domesticus (House cricket).